A 386-amino-acid chain; its full sequence is Succinate--CoA ligase [ADP-forming] subunit beta (386 aa).

One can recognise an ATP-grasp domain in the interval 9-244; sequence KELLREFGVA…TTEEDPREVE (236 aa). ATP-binding positions include Lys46, 53-55, Glu99, Ser102, and Glu107; that span reads GRG. Residues Asn199 and Asp213 each coordinate Mg(2+). Residues Asn264 and 321–323 each bind substrate; that span reads GIM.

Belongs to the succinate/malate CoA ligase beta subunit family. In terms of assembly, heterotetramer of two alpha and two beta subunits. Mg(2+) is required as a cofactor.

The catalysed reaction is succinate + ATP + CoA = succinyl-CoA + ADP + phosphate. It carries out the reaction GTP + succinate + CoA = succinyl-CoA + GDP + phosphate. It participates in carbohydrate metabolism; tricarboxylic acid cycle; succinate from succinyl-CoA (ligase route): step 1/1. Its function is as follows. Succinyl-CoA synthetase functions in the citric acid cycle (TCA), coupling the hydrolysis of succinyl-CoA to the synthesis of either ATP or GTP and thus represents the only step of substrate-level phosphorylation in the TCA. The beta subunit provides nucleotide specificity of the enzyme and binds the substrate succinate, while the binding sites for coenzyme A and phosphate are found in the alpha subunit. The chain is Succinate--CoA ligase [ADP-forming] subunit beta from Exiguobacterium sp. (strain ATCC BAA-1283 / AT1b).